The sequence spans 49 residues: Zinc-containing ferredoxin (49 aa).

An N-terminal extension region spans residues 1–36; it reads GIDPNYRTSRQVVGEHQGHKVYGPVDPPKVLGIHGT. 2 residues coordinate Zn(2+): His16 and His19. An N6-methyllysine modification is found at Lys29. Residue His34 coordinates Zn(2+). Residues 37–49 form a ferredoxin region; it reads IVXVDFDLCIADG. Cys45 provides a ligand contact to [3Fe-4S] cluster.

It depends on [3Fe-4S] cluster as a cofactor. The cofactor is [4Fe-4S] cluster. Requires Zn(2+) as cofactor.

Functionally, ferredoxins are iron-sulfur proteins that transfer electrons in a wide variety of metabolic reactions. In Acidianus infernus, this protein is Zinc-containing ferredoxin (zfx).